An 873-amino-acid polypeptide reads, in one-letter code: MANTVGGILSGVNPFHYNSSSPLTLFLFQACLILLVCNLIHIPFSMMRQPKVISEVISGVILGPTIFGQIPNYTNTIFPTSSIPGLNLVANLGIILFMFFLGLEVDIAFIKKHLKKALVIGIVTLAVPFGFGCLLAIPLFHTYANKTEGERHIKFSVFMVFIAVSISVTAFPVLCRILNELRLIKDRAGIVVLAAGIINDIMGWILLALSIILSSAEGSPVNTVYILLITFAWFLIYFFPLKYLLRWVLIRTHELDRSKPSPLATMCILFIMFISAYFTDIIGVHPIFGAFIAGLVVPRDDHYVVKLTERMEDIPNIVFIPIYFAVAGLNVDLTLLNEGRDWGYVFATIGIAIFTKIISGTLTAKLTGLFWREATAAGVLMSCKGIVEIVVLTVGLNAGIISRKIFGMFVLMALVSTFVTTPLTQLVYPDSYRDGVRKSLSTPAEDDGAADGLDSEGVDKTEINTQLNSLADVSKYRIGELTTVINTTEAISPSLKLLNYLSLGVSPKPKNNKHKNETSLSRMTTATDSTLKSNTFKIKKMVHIWSKSVDDVDTNLSVIDEKLTPFEGVGALRAIHLRLLTERTTDLLQSSSLYNDDPHFTANTDSLLQIFDIFSNLSKIPFSSEVIFSTMREKAANIATMKMDSTDLILLPLKGASYEYRGSPVFIDEKYANFDHIYSHLLGLNELSSTFFKSIFQSLKANFAVQISNTYGRLNADRFKRKRFNLLLPKPYLTQSDYLGLYLLLLICYRDGYNNDNASCSIFINSKNIDFAKDLSTAFAEHDWLNESTIKIVDIPFETKVPEEAIEKPSFIETVLDVGLSDTALADIEETTFIIGEDLPDESEPFSEEVRTVIFEGSNRRFDTLIVHHFSSE.

Residues 1-23 (MANTVGGILSGVNPFHYNSSSPL) are Extracellular-facing. A helical transmembrane segment spans residues 24-44 (TLFLFQACLILLVCNLIHIPF). Residues 45-51 (SMMRQPK) lie on the Cytoplasmic side of the membrane. A helical transmembrane segment spans residues 52 to 72 (VISEVISGVILGPTIFGQIPN). Topologically, residues 73 to 82 (YTNTIFPTSS) are extracellular. A helical transmembrane segment spans residues 83–103 (IPGLNLVANLGIILFMFFLGL). The Cytoplasmic portion of the chain corresponds to 104–116 (EVDIAFIKKHLKK). Residues 117–137 (ALVIGIVTLAVPFGFGCLLAI) traverse the membrane as a helical segment. The Extracellular portion of the chain corresponds to 138-154 (PLFHTYANKTEGERHIK). The helical transmembrane segment at 155-175 (FSVFMVFIAVSISVTAFPVLC) threads the bilayer. Over 176 to 188 (RILNELRLIKDRA) the chain is Cytoplasmic. The chain crosses the membrane as a helical span at residues 189-209 (GIVVLAAGIINDIMGWILLAL). Residues 210-220 (SIILSSAEGSP) lie on the Extracellular side of the membrane. A helical transmembrane segment spans residues 221–241 (VNTVYILLITFAWFLIYFFPL). The Cytoplasmic segment spans residues 242–267 (KYLLRWVLIRTHELDRSKPSPLATMC). Residues 268-288 (ILFIMFISAYFTDIIGVHPIF) traverse the membrane as a helical segment. Residues 289–316 (GAFIAGLVVPRDDHYVVKLTERMEDIPN) are Extracellular-facing. The chain crosses the membrane as a helical span at residues 317 to 337 (IVFIPIYFAVAGLNVDLTLLN). Residues 338–341 (EGRD) are Cytoplasmic-facing. Residues 342–362 (WGYVFATIGIAIFTKIISGTL) traverse the membrane as a helical segment. The Extracellular segment spans residues 363–375 (TAKLTGLFWREAT). Residues 376–396 (AAGVLMSCKGIVEIVVLTVGL) form a helical membrane-spanning segment. The Cytoplasmic portion of the chain corresponds to 397–404 (NAGIISRK). The chain crosses the membrane as a helical span at residues 405–425 (IFGMFVLMALVSTFVTTPLTQ). Residues 426 to 726 (LVYPDSYRDG…DRFKRKRFNL (301 aa)) lie on the Extracellular side of the membrane. Serine 557 is modified (phosphoserine). Lysine 562 is covalently cross-linked (Glycyl lysine isopeptide (Lys-Gly) (interchain with G-Cter in ubiquitin)). Residues 727–747 (LLPKPYLTQSDYLGLYLLLLI) form a helical membrane-spanning segment. At 748–873 (CYRDGYNNDN…TLIVHHFSSE (126 aa)) the chain is on the cytoplasmic side.

This sequence belongs to the monovalent cation:proton antiporter 2 (CPA2) transporter (TC 2.A.37) family.

The protein resides in the membrane. Functionally, potassium-proton antiport. The protein is K(+)/H(+) antiporter 1 (KHA1) of Saccharomyces cerevisiae (strain ATCC 204508 / S288c) (Baker's yeast).